We begin with the raw amino-acid sequence, 725 residues long: Polyribonucleotide nucleotidyltransferase (725 aa).

Residues Asp-488 and Asp-494 each contribute to the Mg(2+) site. A KH domain is found at 555–614; sequence PRMITMKIHPDKIREVIGKGGSTIQALTKETGTTIDIQEDGTITIASTSTDGMAEAKRRI. The region spanning 624–692 is the S1 motif domain; that stretch reads GKIYAGTVLK…EKGRLRLSLK (69 aa). A disordered region spans residues 702-725; sequence ISPIAQGDAPAAAPAAPASPDQQQ. Over residues 706-725 the composition is skewed to low complexity; that stretch reads AQGDAPAAAPAAPASPDQQQ.

This sequence belongs to the polyribonucleotide nucleotidyltransferase family. Mg(2+) is required as a cofactor.

It is found in the cytoplasm. It carries out the reaction RNA(n+1) + phosphate = RNA(n) + a ribonucleoside 5'-diphosphate. Involved in mRNA degradation. Catalyzes the phosphorolysis of single-stranded polyribonucleotides processively in the 3'- to 5'-direction. The chain is Polyribonucleotide nucleotidyltransferase from Cupriavidus metallidurans (strain ATCC 43123 / DSM 2839 / NBRC 102507 / CH34) (Ralstonia metallidurans).